We begin with the raw amino-acid sequence, 353 residues long: MTIKLAIDCMGGDHGVGVTIPAAIHFLAVHEDVEMLLVGQPDAIAAQLKRLHATANPRVHVVPASEVVSMDDPVEVALRKKKDSSMRVAINQLKEGAAQACVSAGNTGALMAVSRYVLKTLDGIDRPAIATAIPNEKGAGTTVLDLGANADCEPEHLLQFAQMASAMVSVVEQKPRPTVGLLNIGEEVIKGNEVVKQAGELLRASDLNFFGNVEGNDIFKGTTDIVVCDGFVGNVALKSTEGLAKMIGEMLRQEFSRSWFTKLLAVVALPVLTRFKRRVDHRRYNGAALLGLRGLVIKSHGSADAYAFEWAIKRAYDAAANGVIARIAQAFESHHDAAGAAPVSTSAPAADAA.

It belongs to the PlsX family. Homodimer. Probably interacts with PlsY.

The protein resides in the cytoplasm. It carries out the reaction a fatty acyl-[ACP] + phosphate = an acyl phosphate + holo-[ACP]. The protein operates within lipid metabolism; phospholipid metabolism. Its function is as follows. Catalyzes the reversible formation of acyl-phosphate (acyl-PO(4)) from acyl-[acyl-carrier-protein] (acyl-ACP). This enzyme utilizes acyl-ACP as fatty acyl donor, but not acyl-CoA. In Ralstonia pickettii (strain 12J), this protein is Phosphate acyltransferase.